Reading from the N-terminus, the 529-residue chain is Isoleucine--tRNA ligase (529 aa).

Residue E482 coordinates L-isoleucyl-5'-AMP. Positions 523 to 527 match the 'KMSKS' region motif; that stretch reads KMSKS. ATP is bound at residue K526.

It belongs to the class-I aminoacyl-tRNA synthetase family. IleS type 1 subfamily. In terms of assembly, monomer.

The protein resides in the cytoplasm. The catalysed reaction is tRNA(Ile) + L-isoleucine + ATP = L-isoleucyl-tRNA(Ile) + AMP + diphosphate. Functionally, catalyzes the attachment of isoleucine to tRNA(Ile). As IleRS can inadvertently accommodate and process structurally similar amino acids such as valine, to avoid such errors it has two additional distinct tRNA(Ile)-dependent editing activities. One activity is designated as 'pretransfer' editing and involves the hydrolysis of activated Val-AMP. The other activity is designated 'posttransfer' editing and involves deacylation of mischarged Val-tRNA(Ile). The chain is Isoleucine--tRNA ligase (ileS) from Aquifex pyrophilus.